The chain runs to 325 residues: SPbeta prophage-derived uncharacterized protein YopR (325 aa).

In Bacillus subtilis (strain 168), this protein is SPbeta prophage-derived uncharacterized protein YopR (yopR).